The chain runs to 344 residues: Arginine N-succinyltransferase (344 aa).

Residue Leu-125 coordinates succinyl-CoA. His-229 functions as the Proton donor in the catalytic mechanism.

It belongs to the arginine N-succinyltransferase family.

It catalyses the reaction succinyl-CoA + L-arginine = N(2)-succinyl-L-arginine + CoA + H(+). The protein operates within amino-acid degradation; L-arginine degradation via AST pathway; L-glutamate and succinate from L-arginine: step 1/5. Its function is as follows. Catalyzes the transfer of succinyl-CoA to arginine to produce N(2)-succinylarginine. This chain is Arginine N-succinyltransferase, found in Shigella boydii serotype 18 (strain CDC 3083-94 / BS512).